The chain runs to 1733 residues: MNLFRPLSHRLSLPSTTTTRDHHHQQHHHHPPPPPSRTHFTTITTSGRWLQRQFPVLTTTVFFSLFLSFPPHPPRPPQDHHRPTPARDHRDPRDHLPPTRTRRDHQHRPPPTTTTTTIKDPQHPQDPLLLPTKTLQEEDPHLLRPTRDPPSAKTHHHQDPPGGGPPSTSSHHHHQDPPGGGPPSPPPRPSTSSSSSHQGPPSTRPPPPQRPPPRWPPPSPQKISETRAGSENTAQTLFSHSENKLFSHPMGEGGEGDRGTAGGGEGDRDDPPPPSPPPRPPPPLPPPPPPPPPPQPPPAGGSARRRRRGGGPPGRGGRRRGGKRRRAEGTEAAAADAEEEEDGDGDEDEDEDRAEGEGREDGGEGPRGAGGGAGESESESGRAEGAPRSAEQQVGVAGVLGLLVVRDGLHLDGPERAAGPAVAAADADDLHRVPVLAGAGPGARGPRGPVGLHGAPGGGADAGLEGGKVPEHGRRGARGGDGARGQHQRGGLGVGLQQRRGAEGAQLGRQALGAAELGEAPAAAGDEDGPQRGAEPPAVGRAVPEGGARVKVRVPEPERGALAGHVLAAVHGGEHALAVGARRQRDRGPGPGAGAHRVAHVVLAAEAQRLGPGVQAGEGGLHAGEAGRAHDGARVQHGRAELAAPGPAHGALGGRVQADADVDVVVPHGRAVRGPVLDGVQHDEPAPRRAEPRAEVLHGAGEAEVPRREQQHPLGVEAADVGAPGPVPGPGVRVRRAEAVGEGGEQRREAAAARVPGRARGALGGLGAELLVGQRVVEHHHAHVLGVGYLPHPGGAAAERGAAARGDVRQGGRVEGERRAPEFGEDLLVHEGAGHLGRAVGGEGRLGGPRRVGLAGRDAAEAAVGRGVLGHGPERAPEPVVLGGGGGGGQQRGSGVRSGPESEGAALAPGPPVLFVVAVAVAVPAEGRAGEPLVLLAVPGAAGPGRAALLLAPLGRWVRAGGGGAGVAGGAGEAGLGAGAGLGAGAGLGAGGAGGPGAGEAGGGARRRRRRRWDDEAGLLGPERGQAGRGLRGPGPRGGLGEPGRGHVGRGEEGRGVGPGGLAGAGPVHAVAHQRRHGAGDEGDRVRGLPPLGRAGPGDRVAEREQRGRHLLEAGGPEGGRGAGGRGQPERAGQQALEDAAAGQDAGVRQLAGHAAGLRGGEGGADAGAEGLDGRLPGAGVRGAARVGHVGVGPAEALQDEGLLGAIVAAAHGHGAHRVRQGPERVLGGHGVPDVRQRRGHAAGDEGAVAVGRVDPALAELVEALVGGLHPRVLQPGHGLAGGPAVDEAHEGLVLLPRVPHLRDEDGHGPGRGAVAGRGLADVVLVPEPLAGVPGAAVADAAVGRRVGAGPGLPERGEQRPVGRRGPVGHEREVVVGGAALPARGPGGLRGRGRGGRGGGGGGGGRGPRGRGGRRRRRWRPGAGEWGAGPDSFVFFSLGGGRGRGGRGGRGGRGRGGGRAPRGGGGGPGGGGRAGRGEVRVAAAAAGAAEAAAAAEGALSGAAPAGLSLRGRPAVPGEAESVLVLLGAAGDGLDGDGGGGVGVGVGVGGDGAPGAKRPRIEPPRGGGLVEQGLAVLVMVTTAVPSGGGGAAAAGRRDRPGGGGGWGSGPPPCRRCGHRCWLCWWRRGPRPRRRPGLTDRVPPRGGPSPRGCRGAGRAGGGGRGGCGGGRAPGAAGGPGLCRCECCRGRRPGPGAGPGPGPEDEVTVLGALMESPTGGPGGRGPGLVLLLVFVV.

10 disordered regions span residues 1–41, 71–394, 437–506, 520–548, 882–907, 993–1141, 1223–1242, 1348–1475, 1585–1608, and 1630–1665; these read MNLF…THFT, PHPP…EQQV, AGAG…EGAQ, APAA…EGGA, LGGG…GAAL, AGGP…EDAA, PERV…RGHA, GAGP…GRAG, SGGG…WGSG, and PRRR…RGGC. The span at 21–31 shows a compositional bias: basic residues; the sequence is DHHHQQHHHHP. Basic and acidic residues predominate over residues 77–97; the sequence is PQDHHRPTPARDHRDPRDHLP. The segment covering 113 to 131 has biased composition (low complexity); that stretch reads TTTTTIKDPQHPQDPLLLP. Positions 135 to 147 are enriched in basic and acidic residues; it reads LQEEDPHLLRPTR. A compositionally biased stretch (pro residues) spans 179 to 189; sequence GGGPPSPPPRP. Residues 190–201 show a composition bias toward low complexity; it reads STSSSSSHQGPP. Residues 202–220 are compositionally biased toward pro residues; sequence STRPPPPQRPPPRWPPPSP. Residues 227 to 240 are compositionally biased toward polar residues; the sequence is RAGSENTAQTLFSH. Residues 272–299 are compositionally biased toward pro residues; sequence PPPSPPPRPPPPLPPPPPPPPPPQPPPA. Over residues 316–326 the composition is skewed to basic residues; the sequence is GGRRRGGKRRR. Acidic residues predominate over residues 336–354; that stretch reads DAEEEEDGDGDEDEDEDRA. Over residues 355 to 364 the composition is skewed to basic and acidic residues; that stretch reads EGEGREDGGE. Composition is skewed to gly residues over residues 365–374, 454–466, and 479–494; these read GPRGAGGGAG, GAPG…GLEG, and GGDG…GLGV. Residues 495-506 show a composition bias toward low complexity; sequence GLQQRRGAEGAQ. Residues 882 to 892 show a composition bias toward gly residues; it reads LGGGGGGGQQR. Low complexity predominate over residues 893-907; that stretch reads GSGVRSGPESEGAAL. Gly residues-rich tracts occupy residues 993–1004 and 1027–1043; these read AGGPGAGEAGGG and AGRG…LGEP. Composition is skewed to basic and acidic residues over residues 1078–1087 and 1100–1112; these read GAGDEGDRVR and RVAE…RHLL. Residues 1116–1127 are compositionally biased toward gly residues; it reads GPEGGRGAGGRG. The segment covering 1385 to 1407 has biased composition (gly residues); the sequence is GPGGLRGRGRGGRGGGGGGGGRG. Composition is skewed to basic residues over residues 1408–1420 and 1444–1453; these read PRGR…RRWR and RGGRGGRGGR. Residues 1454-1474 show a composition bias toward gly residues; the sequence is GRGGGRAPRGGGGGPGGGGRA. A compositionally biased stretch (gly residues) spans 1652 to 1665; the sequence is RGAGRAGGGGRGGC.

The protein is Probable nuclear antigen of Sus scrofa (Pig).